Reading from the N-terminus, the 741-residue chain is 1,4-alpha-glucan branching enzyme GlgB (741 aa).

Asp420 acts as the Nucleophile in catalysis. Residue Glu473 is the Proton donor of the active site.

Belongs to the glycosyl hydrolase 13 family. GlgB subfamily. As to quaternary structure, monomer.

The catalysed reaction is Transfers a segment of a (1-&gt;4)-alpha-D-glucan chain to a primary hydroxy group in a similar glucan chain.. It functions in the pathway glycan biosynthesis; glycogen biosynthesis. Functionally, catalyzes the formation of the alpha-1,6-glucosidic linkages in glycogen by scission of a 1,4-alpha-linked oligosaccharide from growing alpha-1,4-glucan chains and the subsequent attachment of the oligosaccharide to the alpha-1,6 position. The protein is 1,4-alpha-glucan branching enzyme GlgB of Pseudomonas syringae pv. tomato (strain ATCC BAA-871 / DC3000).